A 294-amino-acid chain; its full sequence is Deubiquitinase OTUD6B (294 aa).

Positions 85 to 120 are disordered; that stretch reads VTSLDLGSEEPVQQPRVSKAQKRREKKAAQEKERDD. Positions 111–120 are enriched in basic and acidic residues; that stretch reads KAAQEKERDD. The 138-residue stretch at 150 to 287 folds into the OTU domain; the sequence is LQIRQIPSDG…GEHYNSVEQL (138 aa). Positions 155–161 are cys-loop; the sequence is IPSDGHC. Asp158 is an active-site residue. Residue Cys161 is the Nucleophile of the active site. The segment at 222-232 is variable-loop; sequence IVNTPAWGGQL. The interval 270–280 is his-loop; it reads YMRHAYGLGEH. Residue His280 is part of the active site.

The catalysed reaction is Thiol-dependent hydrolysis of ester, thioester, amide, peptide and isopeptide bonds formed by the C-terminal Gly of ubiquitin (a 76-residue protein attached to proteins as an intracellular targeting signal).. Its function is as follows. Deubiquitinating enzyme that may play a role in the ubiquitin-dependent regulation of different cellular processes. The protein is Deubiquitinase OTUD6B (otud6b) of Xenopus laevis (African clawed frog).